We begin with the raw amino-acid sequence, 301 residues long: uncharacterized protein (301 aa).

The protein belongs to the asfivirus E301R family. Interacts with host IRF3.

Functionally, plays a role in the inhibition of host innate immune system by acting as a negatively regulator of type I interferon production. Mechanistically, interacts with and prevents host IRF3 nuclear localization to inhibit its transcriptional activity. This is an uncharacterized protein from African swine fever virus (strain Badajoz 1971 Vero-adapted) (Ba71V).